The primary structure comprises 4857 residues: MVTGGGAAPPGTVTEPLPSVIVLSAGRKMAAAAAAASGPGCSSAAGAGAAGVSEWLVLRDGCMHCDADGLHSLSYHPALNAILAVTSRGTIKVIDGTSGATLQASALSAKPGGQVKCQYISAVDKVIFVDDYAVGCRKDLNGILLLDTALQTPVSKQDDVVQLELPVTEAQQLLSACLEKVDISSTEGYDLFITQLKDGLKNTSHETAANHKVAKWATVTFHLPHHVLKSIASAIVNELKKINQNVAALPVASSVMDRLSYLLPSARPELGVGPGRSVDRSLMYSEANRRETFTSWPHVGYRWAQPDPMAQAGFYHQPASSGDDRAMCFTCSVCLVCWEPTDEPWSEHERHSPNCPFVKGEHTQNVPLSVTLATSPAQFPCTDGTDRISCFGSGSCPHFLAAATKRGKICIWDVSKLMKVHLKFEINAYDPAIVQQLILSGDPSSGVDSRRPTLAWLEDSSSCSDIPKLEGDSDDLLEDSDSEEHSRSDSVTGHTSQKEAMEVSLDITALSILQQPEKLQWEIVANVLEDTVKDLEELGANPCLTNSKSEKTKEKHQEQHNIPFPCLLAGGLLTYKSPATSPISSNSHRSLDGLSRTQGESISEQGSTDNESCTNSELNSPLVRRTLPVLLLYSIKESDEKAGKIFSQMNNIMSKSLHDDGFTVPQIIEMELDSQEQLLLQDPPVTYIQQFADAAANLTSPDSEKWNSVFPKPGTLVQCLRLPKFAEEENLCIDSITPCADGIHLLVGLRTCPVESLSAINQVEALNNLNKLNSALCNRRKGELESNLAVVNGANISVIQHESPADVQTPLIIQPEQRNVSGGYLVLYKMNYATRIVTLEEEPIKIQHIKDPQDTITSLILLPPDILDNREDDCEEPIEDMQLTSKNGFEREKTSDISTLGHLVITTQGGYVKILDLSNFEILAKVEPPKKEGTEEQDTFVSVIYCSGTDRLCACTKGGELHFLQIGGTCDDIDEADILVDGSLSKGIEPSSEGSKPLSNPSSPGISGVDLLVDQPFTLEILTSLVELTRFETLTPRFSATVPPCWVEVQQEQQQRRHPQHLHQQHHGDAAQHTRTWKLQTDSNSWDEHVFELVLPKACMVGHVDFKFVLNSNITNIPQIQVTLLKNKAPGLGKVNALNIEVEQNGKPSLVDLNEEMQHMDVEESQCLRLCPFLEDHKEDILCGPVWLASGLDLSGHAGMLTLTSPKLVKGMAGGKYRSFLIHVKAVNERGTEEICNGGMRPVVRLPSLKHQSNKGYSLASLLAKVAAGKEKSSNVKNENTSGTRKSENLRGCDLLQEVSVTIRRFKKTSISKERVQRCAMLQFSEFHEKLLNTLCRKTDDGQITEHAQSLVLDTLCWLAGVHSNGPGSSKEGNENLLSKTRKFLSDIVRVCFFEAGRSIAHKCARFLALCISNGKCDPCQPAFGPVLLKALLDNMSFLPAATTGGSVYWYFVLLNYVKDEDLAGCSTACASLLTAVSRQLQDRLTPMEALLQTRYGLYSSPFDPVLFDLEMSGSSCKNVYNSSIGVQSDEIDLSDVLSGNGKVSSCTAAEGSFTSLTGLLEVEPLHFTCVSTSDGTRIERDDAMSSFGVTPAVGGLSSGTVGEASTALSSAAQVALQSLSHAMASAEQQLQVLQEKQQQLLKLQQQKAKLEAKLHQTTAAAAAAASAVGPVHNSVPSNPVAAPGFFIHPSDVIPPTPKTTPLFMTPPLTPPNEAVSVVINAELAQLFPGSVIDPPAVNLAAHNKNSNKSRMNPLGSGLALAISHASHFLQPPPHQSIIIERMHSGARRFVTLDFGRPILLTDVLIPTCGDLASLSIDIWTLGEEVDGRRLVVATDISTHSLILHDLIPPPVCRFMKITVIGRYGSTNARAKIPLGFYYGHTYILPWESELKLMHDPLKGEGESANQPEIDQHLAMMVALQEDIQCRYNLACHRLETLLQSIDLPPLNSANNAQYFLRKPDKAVEEDSRVFSAYQDCIQLQLQLNLAHNAVQRLKVALGASRKMLSETSNPEDLIQTSSTEQLRTIIRYLLDTLLSLLHASNGHSVPAVLQSTFHAQACEELFKHLCISGTPKIRLHTGLLLVQLCGGERWWGQFLSNVLQELYNSEQLLIFPQDRVFMLLSCIGQRSLSNSGVLESLLNLLDNLLSPLQPQLPMHRRTEGVLDIPMISWVVMLVSRLLDYVATVEDEAAAAKKPLNGNQWSFINNNLHTQSLNRSSKGSSSLDRLYSRKIRKQLVHHKQQLNLLKAKQKALVEQMEKEKIQSNKGSSYKLLVEQAKLKQATSKHFKDLIRLRRTAEWSRSNLDTEVTTAKESPEIEPLPFTLAHERCISVVQKLVLFLLSMDFTCHADLLLFVCKVLARIANATRPTIHLCEIVNEPQLERLLLLLVGTDFNRGDISWGGAWAQYSLTCMLQDILAGELLAPVAAEAMEEGTVGDDVGATAGDSDDSLQQSSVQLLETIDEPLTHDITGAPPLSSLEKDKEIDLELLQDLMEVDIDPLDIDLEKDPLAAKVFKPISSTWYDYWGADYGTYNYNPYIGGLGIPVAKPPANTEKNGSQTVSVSVSQALDARLEVGLEQQAELMLKMMSTLEADSILQALTNTSPTLSQSPTGTDDSLLGGLQAANQTSQLIIQLSSVPMLNVCFNKLFSMLQVHHVQLESLLQLWLTLSLNSSSTGNKENGADIFLYNANRIPVISLNQASITSFLTVLAWYPNTLLRTWCLVLHSLTLMTNMQLNSGSSSAIGTQESTAHLLVSDPNLIHVLVKFLSGTSPHGTNQHSPQVGPTATQAMQEFLTRLQVHLSSTCPQIFSEFLLKLIHILSTERGAFQTGQGPLDAQVKLLEFTLEQNFEVVSVSTISAVIESVTFLVHHYITCSDKVMSRSGSDSSVGARACFGGLFANLIRPGDAKAVCGEMTRDQLMFDLLKLVNILVQLPLSGNREYSARVSVTTNTTDSVSDEEKVSGGKDGNGSSTSVQGSPAYVADLVLANQQIMSQILSALGLCNSSAMAMIIGASGLHLTKHENFHGGLDAISVGDGLFTILTTLSKKASTVHMMLQPILTYMACGYMGRQGSLATCQLSEPLLWFILRVLDTSDALKAFHDMGGVQLICNNMVTSTRAIVNTARSMVSTIMKFLDSGPNKAVDSTLKTRILASEPDNAEGIHNFAPLGTITSSSPTAQPAEVLLQATPPHRRARSAAWSYIFLPEEAWCDLTIHLPAAVLLKEIHIQPHLASLATCPSSVSVEVSADGVNMLPLSTPVVTSGLTYIKIQLVKAEVASAVCLRLHRPRDASTLGLSQIKLLGLTAFGTTSSATVNNPFLPSEDQVSKTSIGWLRLLHHCLTHISDLEGMMASAAAPTANLLQTCAALLMSPYCGMHSPNIEVVLVKIGLQSTRIGLKLIDILLRNCAASGSDPTDLNSPLLFGRLNGLSSDSTIDILYQLGTTQDPGTKDRIQALLKWVSDSARVAAMKRSGRMNYMCPNSSTVEYGLLMPSPSHLHCVAAILWHSYELLVEYDLPALLDQELFELLFNWSMSLPCNMVLKKAVDSLLCSMCHVHPNYFSLLMGWMGITPPPVQCHHRLSMTDDSKKQDLSSSLTDDSKNAQAPLALTESHLATLASSSQSPEAIKQLLDSGLPSLLVRSLASFCFSHISSSESIAQSIDISQDKLRRHHVPQQCNKMPITADLVAPILRFLTEVGNSHIMKDWLGGSEVNPLWTALLFLLCHSGSTSGSHNLGAQQTSARSASLSSAATTGLTTQQRTAIENATVAFFLQCISCHPNNQKLMAQVLCELFQTSPQRGNLPTSGNISGFIRRLFLQLMLEDEKVTMFLQSPCPLYKGRINATSHVIQHPMYGAGHKFRTLHLPVSTTLSDVLDRVSDTPSITAKLISEQKDDKEKKNHEEKEKVKAENGFQDNYSVVVASGLKSQSKRAVSATPPRPPSRRGRTIPDKIGSTSGAEAANKIITVPVFHLFHKLLAGQPLPAEMTLAQLLTLLYDRKLPQGYRSIDLTVKLGSRVITDPSLSKTDSYKRLHPEKDHGDLLASCPEDEALTPGDECMDGILDESLLETCPIQSPLQVFAGMGGLALIAERLPMLYPEVIQQVSAPVVTSTTQEKPKDSDQFEWVTIEQSGELVYEAPETVAAEPPPIKSAVQTMSPIPAHSLAAFGLFLRLPGYAEVLLKERKHAQCLLRLVLGVTDDGEGSHILQSPSANVLPTLPFHVLRSLFSTTPLTTDDGVLLRRMALEIGALHLILVCLSALSHHSPRVPNSSVNQTEPQVSSSHNPTSTEEQQLYWAKGTGFGTGSTASGWDVEQALTKQRLEEEHVTCLLQVLASYINPVSSAVNGEAQSSHETRGQNSNALPSVLLELLSQSCLIPAMSSYLRNDSVLDMARHVPLYRALLELLRAIASCAAMVPLLLPLSTENGEEEEEQSECQTSVGTLLAKMKTCVDTYTNRLRSKRENVKTGVKPDASDQEPEGLTLLVPDIQKTAEIVYAATTSLRQANQEKKLGEYSKKAAMKPKPLSVLKSLEEKYVAVMKKLQFDTFEMVSEDEDGKLGFKVNYHYMSQVKNANDANSAARARRLAQEAVTLSTSLPLSSSSSVFVRCDEERLDIMKVLITGPADTPYANGCFEFDVYFPQDYPSSPPLVNLETTGGHSVRFNPNLYNDGKVCLSILNTWHGRPEEKWNPQTSSFLQVLVSVQSLILVAEPYFNEPGYERSRGTPSGTQSSREYDGNIRQATVKWAMLEQIRNPSPCFKEVIHKHFYLKRVEIMAQCEEWIADIQQYSSDKRVGRTMSHHAAALKRHTAQLREELLKLPCPEGLDPDTDDAPEVCRATTGAEETLMHDQVKPSSSKELPSDFQL.

2 WD repeats span residues 68–106 (DGLH…QASA) and 107–136 (LSAK…AVGC). A BIR repeat occupies 268–377 (PELGVGPGRS…LSVTLATSPA (110 aa)). Residues C328, C331, H348, and C355 each coordinate Zn(2+). One copy of the WD 3 repeat lies at 379-426 (FPCTDGTDRISCFGSGSCPHFLAAATKRGKICIWDVSKLMKVHLKFEI). Disordered stretches follow at residues 465-498 (DIPK…TSQK) and 579-618 (ATSP…NSEL). Positions 472-482 (DSDDLLEDSDS) are enriched in acidic residues. S473, S480, S482, S581, and S590 each carry phosphoserine. 4 WD repeats span residues 501-720 (MEVS…VQCL), 730-850 (NLCI…QHIK), 851-927 (DPQD…AKVE), and 928-966 (PPKK…FLQI). Over residues 579 to 588 (ATSPISSNSH) the composition is skewed to polar residues. The span at 595 to 618 (SRTQGESISEQGSTDNESCTNSEL) shows a compositional bias: polar residues. Disordered stretches follow at residues 984–1004 (LSKG…PSSP) and 1053–1073 (QQQR…AAQH). Over residues 992-1004 (SEGSKPLSNPSSP) the composition is skewed to polar residues. A compositionally biased stretch (basic residues) spans 1056–1065 (RRHPQHLHQQ). Phosphothreonine is present on T1710. Residues S2222 and S2955 each carry the phosphoserine modification. Positions 2945–2973 (SVTTNTTDSVSDEEKVSGGKDGNGSSTSV) are disordered. Residues 3189-3193 (HRRAR) are HRRAR loop; important for DIABLO/SMAC and HTRA2 binding. In terms of domain architecture, Ubiquitin-like spans 3819–4068 (DEKVTMFLQS…ESLLETCPIQ (250 aa)). The disordered stretch occupies residues 3923-3949 (QSKRAVSATPPRPPSRRGRTIPDKIGS). A Phosphothreonine modification is found at T3931. S4023 carries the post-translational modification Phosphoserine. The tract at residues 4260–4283 (RVPNSSVNQTEPQVSSSHNPTSTE) is disordered. Positions 4261–4283 (VPNSSVNQTEPQVSSSHNPTSTE) are enriched in polar residues. One can recognise a UBC core domain in the interval 4573 to 4740 (ARARRLAQEA…IRQATVKWAM (168 aa)). Residue C4666 is the Glycyl thioester intermediate of the active site. Residues 4835–4857 (EETLMHDQVKPSSSKELPSDFQL) are disordered. Residues 4844–4857 (KPSSSKELPSDFQL) show a composition bias toward polar residues.

The protein belongs to the BIRC6 family. Homodimer; antiparallel. Interacts with RNF41. Interacts with DIABLO/SMAC, likely with higher affinity to SMAC dimer than SMAC monomer; this interaction blocks the substrate-binding site and inhibits the caspase inhibition activity of BIRC6. Interacts with KIF23/MKLP1, USP8/UBPY, BIRC5/survivin, MAP2K1/MEK1, RAB8A/RAB8, RAB11A/RAB11, PLK1, EXOC3/SEC6 and EXOC4/SEC8. Ubiquitinated; mediated by RNF41 E3 ligase and leads to proteasomal degradation, impairing inhibition of apoptosis. Deubiquitinated by USP8/UBPY. Autoubiquitinated; mediated by E1 ubiquitin activating enzyme UBA6. In terms of processing, proteolytically cleaved. Acts as substrate for CASP3, CASP6, CASP7, CASP9 and HTRA2. As to expression, expressed in brain cancer cells.

The protein localises to the golgi apparatus. The protein resides in the trans-Golgi network membrane. It is found in the endosome. Its subcellular location is the cytoplasm. It localises to the cytoskeleton. The protein localises to the spindle pole. The protein resides in the microtubule organizing center. It is found in the centrosome. Its subcellular location is the midbody. It localises to the midbody ring. It carries out the reaction S-ubiquitinyl-[E1 ubiquitin-activating enzyme]-L-cysteine + [acceptor protein]-L-lysine = [E1 ubiquitin-activating enzyme]-L-cysteine + N(6)-monoubiquitinyl-[acceptor protein]-L-lysine.. Inhibited by DIABLO/SMAC, which competes for the substrate-binding sites on BIRC6. BIRC6 inhibits caspases and protease by ubiquitination but BIRC6 itself is subjected to protease cleavage by CASP3, CASP6, CASP7, CASP9 and HTRA2 by protease cleavage. In terms of biological role, anti-apoptotic protein known as inhibitor of apoptosis (IAP) which can regulate cell death by controlling caspases and by acting as an E3 ubiquitin-protein ligase. Unlike most IAPs, does not contain a RING domain and it is not a RING-type E3 ligase. Instead acts as a dual E2/E3 enzyme that combines ubiquitin conjugating (E2) and ubiquitin ligase (E3) activities in a single polypeptide. Ubiquitination is mediated by a non-canonical E1 ubiquitin activating enzyme UBA6. Ubiquitinates CASP3, CASP7 and CASP9 and inhibits their caspase activity; also ubiquitinates their procaspases but to a weaker extent. Ubiquitinates pro-apoptotic factors DIABLO/SMAC and HTRA2. DIABLO/SMAC antagonizes the caspase inhibition activity of BIRC6 by competing for the same binding sites as the caspases. Ubiquitinates the autophagy protein MAP1LC3B; this activity is also inhibited by DIABLO/SMAC. Important regulator for the final stages of cytokinesis. Crucial for normal vesicle targeting to the site of abscission, but also for the integrity of the midbody and the midbody ring, and its striking ubiquitin modification. The sequence is that of Dual E2 ubiquitin-conjugating enzyme/E3 ubiquitin-protein ligase BIRC6 (BIRC6) from Homo sapiens (Human).